A 738-amino-acid chain; its full sequence is Protein Aster-B (738 aa).

The tract at residues 1–81 (MKGFKLSCTA…SGGKNSKKSQ (81 aa)) is disordered. Polar residues predominate over residues 8–19 (CTASNSNRSTPA). Phosphoserine is present on residues serine 28 and serine 30. Residues 41 to 51 (MVEKGSDHSSD) are compositionally biased toward basic and acidic residues. Low complexity predominate over residues 59–70 (QGVQRSCSSQSG). Residues 96–163 (EDFRKLFKQL…KDICSMTKEK (68 aa)) form the GRAM domain. Positions 254–299 (EENEVNDSSSKSSIETKPDASPQLPKKSITNSTLTSTGSSEAPVSF) are disordered. Positions 259–268 (NDSSSKSSIE) are enriched in polar residues. Serine 274 carries the post-translational modification Phosphoserine. Residues 281–295 (SITNSTLTSTGSSEA) show a composition bias toward polar residues. The VASt domain occupies 372–543 (SGRQYVNEVF…ELTKTESTYL (172 aa)). Tyrosine 389 is subject to Phosphotyrosine. Serine 550 and serine 581 each carry phosphoserine. Phosphothreonine occurs at positions 584, 585, and 587. A helical transmembrane segment spans residues 623–643 (LLLVISCVICFSLVLLVVLNM).

In terms of tissue distribution, highly expressed in the adrenal gland (at protein level) and brain. Also found in the kidney, testis and macrophages.

It localises to the endoplasmic reticulum membrane. Its subcellular location is the cell membrane. Functionally, cholesterol transporter that mediates non-vesicular transport of cholesterol from the plasma membrane (PM) to the endoplasmic reticulum (ER). Contains unique domains for binding cholesterol and the PM, thereby serving as a molecular bridge for the transfer of cholesterol from the PM to the ER. Plays a crucial role in cholesterol homeostasis in the adrenal gland and has the unique ability to localize to the PM based on the level of membrane cholesterol. In lipid-poor conditions localizes to the ER membrane and in response to excess cholesterol in the PM is recruited to the endoplasmic reticulum-plasma membrane contact sites (EPCS) which is mediated by the GRAM domain. At the EPCS, the sterol-binding VASt/ASTER domain binds to the cholesterol in the PM and facilitates its transfer from the PM to ER. The polypeptide is Protein Aster-B (Gramd1b) (Mus musculus (Mouse)).